Reading from the N-terminus, the 805-residue chain is Lon protease (805 aa).

One can recognise a Lon N-terminal domain in the interval 13-205; it reads IPIIVEDELF…KLIDYVIEEI (193 aa). An ATP-binding site is contributed by 366–373; it reads GPPGVGKT. Positions 603–803 constitute a Lon proteolytic domain; it reads KDQIGLVNGL…DDVLKNALVA (201 aa). Catalysis depends on residues S708 and K751.

It belongs to the peptidase S16 family. As to quaternary structure, homohexamer. Organized in a ring with a central cavity.

Its subcellular location is the cytoplasm. It catalyses the reaction Hydrolysis of proteins in presence of ATP.. ATP-dependent serine protease that mediates the selective degradation of mutant and abnormal proteins as well as certain short-lived regulatory proteins. Required for cellular homeostasis and for survival from DNA damage and developmental changes induced by stress. Degrades polypeptides processively to yield small peptide fragments that are 5 to 10 amino acids long. Binds to DNA in a double-stranded, site-specific manner. The chain is Lon protease from Campylobacter concisus (strain 13826).